Reading from the N-terminus, the 1182-residue chain is Rho GTPase-activating protein 20 (1182 aa).

A disordered region spans residues 1 to 40; it reads MEAMSPQQDALGAQPGRSSSLTGMSRIAGGPGTKKKMKTL. Ser-46 is modified (phosphoserine). The 102-residue stretch at 86–187 folds into the PH domain; it reads LLIDGPVELK…SLLQRYIALE (102 aa). The Ras-associating domain maps to 194 to 283; it reads KSIPLKIFAK…TALLTQGSKD (90 aa). The Rho-GAP domain occupies 365 to 551; the sequence is VSLPDICEND…FLIENCCRIF (187 aa). Phosphoserine occurs at positions 704 and 730. Disordered regions lie at residues 744 to 791, 932 to 953, 981 to 1009, and 1140 to 1182; these read KQTQ…IQET, ASYS…SSQD, QRKQ…GQAS, and EESG…GDRH. Polar residues predominate over residues 757–775; that stretch reads FKQSSVTGTDVSKRNTANE. Residues 933 to 953 show a composition bias toward low complexity; sequence SYSSLSSPGTSPSGSSVSSQD.

In terms of tissue distribution, highest expression is found in testis. Ubiquitously expressed in extragonadal tissues.

In terms of biological role, GTPase activator for the Rho-type GTPases by converting them to an inactive GDP-bound state. This is Rho GTPase-activating protein 20 (Arhgap20) from Rattus norvegicus (Rat).